Consider the following 716-residue polypeptide: Polyribonucleotide nucleotidyltransferase (716 aa).

2 residues coordinate Mg(2+): aspartate 495 and aspartate 501. The KH domain maps to 562-621 (PRLFRIQINPEQIGLVIGPGGKTIRSITEQTGAKIDIEDTGAVTISAVDADSALRAKSII). Positions 631 to 699 (GDVYIGKVTR…QKGRVNLTRK (69 aa)) constitute an S1 motif domain.

Belongs to the polyribonucleotide nucleotidyltransferase family. The cofactor is Mg(2+).

The protein resides in the cytoplasm. It catalyses the reaction RNA(n+1) + phosphate = RNA(n) + a ribonucleoside 5'-diphosphate. Involved in mRNA degradation. Catalyzes the phosphorolysis of single-stranded polyribonucleotides processively in the 3'- to 5'-direction. This chain is Polyribonucleotide nucleotidyltransferase, found in Synechococcus elongatus (strain ATCC 33912 / PCC 7942 / FACHB-805) (Anacystis nidulans R2).